A 217-amino-acid chain; its full sequence is Adenylate kinase (217 aa).

11 to 16 (GAGKGT) contacts ATP. An NMP region spans residues 31–60 (STGDMFREAMANETPVGLEAKSYIDKGNLV). AMP contacts are provided by residues T32, R37, 58–60 (NLV), 86–89 (GFPR), and Q93. The segment at 127–165 (ARYICKKCGATYNKISNPTKVEGTCDRCGGHEFFQREDD) is LID. ATP is bound at residue R128. Positions 131 and 134 each coordinate Zn(2+). 137–138 (TY) contributes to the ATP binding site. C151 and C154 together coordinate Zn(2+). AMP contacts are provided by R162 and R173. ATP is bound at residue Q201.

The protein belongs to the adenylate kinase family. In terms of assembly, monomer.

It is found in the cytoplasm. The catalysed reaction is AMP + ATP = 2 ADP. Its pathway is purine metabolism; AMP biosynthesis via salvage pathway; AMP from ADP: step 1/1. In terms of biological role, catalyzes the reversible transfer of the terminal phosphate group between ATP and AMP. Plays an important role in cellular energy homeostasis and in adenine nucleotide metabolism. The protein is Adenylate kinase of Lactobacillus johnsonii (strain CNCM I-12250 / La1 / NCC 533).